Here is a 389-residue protein sequence, read N- to C-terminus: Lipid-A-disaccharide synthase (389 aa).

It belongs to the LpxB family.

It carries out the reaction a lipid X + a UDP-2-N,3-O-bis[(3R)-3-hydroxyacyl]-alpha-D-glucosamine = a lipid A disaccharide + UDP + H(+). It participates in bacterial outer membrane biogenesis; LPS lipid A biosynthesis. Condensation of UDP-2,3-diacylglucosamine and 2,3-diacylglucosamine-1-phosphate to form lipid A disaccharide, a precursor of lipid A, a phosphorylated glycolipid that anchors the lipopolysaccharide to the outer membrane of the cell. The chain is Lipid-A-disaccharide synthase from Burkholderia ambifaria (strain ATCC BAA-244 / DSM 16087 / CCUG 44356 / LMG 19182 / AMMD) (Burkholderia cepacia (strain AMMD)).